Reading from the N-terminus, the 499-residue chain is Glycerol kinase (499 aa).

Thr12 contacts ADP. The ATP site is built by Thr12, Thr13, and Ser14. Position 12 (Thr12) interacts with sn-glycerol 3-phosphate. Arg16 contributes to the ADP binding site. Sn-glycerol 3-phosphate is bound by residues Arg82, Glu83, and Tyr134. Glycerol is bound by residues Arg82, Glu83, and Tyr134. Residue His230 is modified to Phosphohistidine; by HPr. Asp244 is a sn-glycerol 3-phosphate binding site. The glycerol site is built by Asp244 and Gln245. Thr266 and Gly309 together coordinate ADP. ATP-binding residues include Thr266, Gly309, Gln313, and Gly410. Residues Gly410 and Asn414 each contribute to the ADP site.

It belongs to the FGGY kinase family. Homotetramer and homodimer (in equilibrium). In terms of processing, the phosphoenolpyruvate-dependent sugar phosphotransferase system (PTS), including enzyme I, and histidine-containing protein (HPr) are required for the phosphorylation, which leads to the activation of the enzyme.

The enzyme catalyses glycerol + ATP = sn-glycerol 3-phosphate + ADP + H(+). It functions in the pathway polyol metabolism; glycerol degradation via glycerol kinase pathway; sn-glycerol 3-phosphate from glycerol: step 1/1. Its activity is regulated as follows. Activated by phosphorylation and inhibited by fructose 1,6-bisphosphate (FBP). Key enzyme in the regulation of glycerol uptake and metabolism. Catalyzes the phosphorylation of glycerol to yield sn-glycerol 3-phosphate. This is Glycerol kinase from Staphylococcus epidermidis (strain ATCC 12228 / FDA PCI 1200).